Reading from the N-terminus, the 403-residue chain is S-arrestin (403 aa).

Residue Thr231 is modified to Phosphothreonine. Residues 381–403 (RQNLKDTGENTEGKKDEDAGQDE) form a disordered region.

This sequence belongs to the arrestin family. In terms of assembly, monomer. Homodimer. Homotetramer. Interacts with RHO (via the phosphorylated C-terminus). As to expression, retina and pineal gland.

The protein resides in the cell projection. It localises to the cilium. Its subcellular location is the photoreceptor outer segment. The protein localises to the membrane. In terms of biological role, binds to photoactivated, phosphorylated RHO and terminates RHO signaling via G-proteins by competing with G-proteins for the same binding site on RHO. May play a role in preventing light-dependent degeneration of retinal photoreceptor cells. This Rattus norvegicus (Rat) protein is S-arrestin (Sag).